The sequence spans 161 residues: Small ribosomal subunit protein uS19 (161 aa).

Residues 1–19 (MARQKKYSGKGGARKKNKQ) show a composition bias toward basic residues. A disordered region spans residues 1–26 (MARQKKYSGKGGARKKNKQKQSVAPR).

The protein belongs to the universal ribosomal protein uS19 family.

Functionally, protein S19 forms a complex with S13 that binds strongly to the 16S ribosomal RNA. This Methanococcus maripaludis (strain C6 / ATCC BAA-1332) protein is Small ribosomal subunit protein uS19.